Reading from the N-terminus, the 1627-residue chain is Formin-like protein 5 (1627 aa).

Positions 5–194 (RKFFLKKTPD…HYITRQGSGP (190 aa)) constitute a Phosphatase tensin-type domain. The active-site Phosphocysteine intermediate is the cysteine 127. One can recognise a C2 tensin-type domain in the interval 200–337 (SRPLILDSIV…FRAEVVFSDP (138 aa)). Disordered regions lie at residues 370–413 (EAEE…LEKH), 680–787 (TKRE…YDSS), 801–1181 (KFNV…RGVV), 1241–1261 (AAVP…SLGS), and 1571–1627 (KQAE…KDVG). Composition is skewed to basic and acidic residues over residues 402 to 413 (VSREDSGSLEKH), 681 to 691 (KREESGGRRDV), 700 to 717 (IEAR…RQIP), and 726 to 742 (MPVD…EKLG). Pro residues-rich tracts occupy residues 824-835 (APPPPPPPPPPY), 852-870 (QPPP…PPPA), 877-886 (IPPPPPPPPL), 897-908 (VPPPPPPPPPPR), 931-965 (ISPP…PPSA), and 974-1168 (APPP…PPGG). An FH2 domain is found at 1188-1588 (FGAAAARKST…RAEKEAEAEK (401 aa)). Composition is skewed to basic and acidic residues over residues 1248–1261 (DSSK…SLGS) and 1571–1590 (KQAE…EKSK). Polar residues predominate over residues 1600 to 1611 (KPSNPSRQVKQT). Residues 1612–1627 (PDTKTRAASRRGKDVG) are compositionally biased toward basic and acidic residues.

The protein belongs to the formin-like family. Class-II subfamily.

This Oryza sativa subsp. japonica (Rice) protein is Formin-like protein 5 (FH5).